Consider the following 122-residue polypeptide: Large ribosomal subunit protein uL14 (122 aa).

Belongs to the universal ribosomal protein uL14 family. As to quaternary structure, part of the 50S ribosomal subunit. Forms a cluster with proteins L3 and L19. In the 70S ribosome, L14 and L19 interact and together make contacts with the 16S rRNA in bridges B5 and B8.

Binds to 23S rRNA. Forms part of two intersubunit bridges in the 70S ribosome. The protein is Large ribosomal subunit protein uL14 of Parvibaculum lavamentivorans (strain DS-1 / DSM 13023 / NCIMB 13966).